The sequence spans 229 residues: Adenine nucleotide translocase lysine N-methyltransferase (229 aa).

The N-terminal sequence (NTS) stretch occupies residues 1 to 22 (MDQDDPAEALTELREKRLGLLE). A helical membrane pass occupies residues 20–42 (LLEIVQAAAGSGLAVYTIWALLL). A methyltransferase (MTase) region spans residues 43-77 (QPGFRRVPLRLQVPYVGASARQVENVLSLLRGRPG). A pre-methyltransferase (preMT) region spans residues 43–77 (QPGFRRVPLRLQVPYVGASARQVENVLSLLRGRPG).

It belongs to the ANT/ATPSC lysine N-methyltransferase family.

The protein resides in the mitochondrion membrane. The enzyme catalyses L-lysyl-[protein] + 3 S-adenosyl-L-methionine = N(6),N(6),N(6)-trimethyl-L-lysyl-[protein] + 3 S-adenosyl-L-homocysteine + 3 H(+). Its function is as follows. Mitochondrial protein-lysine N-methyltransferase that trimethylates adenine nucleotide translocases ANT2/SLC25A5 and ANT3/SLC25A6, thereby regulating mitochondrial respiration. Probably also trimethylates ANT1/SLC25A4. This is Adenine nucleotide translocase lysine N-methyltransferase from Mus musculus (Mouse).